A 566-amino-acid chain; its full sequence is Nitrate/nitrite sensor protein NarQ (566 aa).

Residues 1 to 13 (MIVKRPVSASLAR) are Cytoplasmic-facing. A helical membrane pass occupies residues 14 to 34 (AFFYIVLLSILSTGIALLTLA). At 35–146 (SSLRDAEAIN…LALQHYAERK (112 aa)) the chain is on the periplasmic side. The helical transmembrane segment at 147–167 (MLLVVAISLAGGIGIFTLVFF) threads the bilayer. At 168 to 566 (TLRRIRHQVV…SAEGEESQLM (399 aa)) the chain is on the cytoplasmic side. Residues 174 to 227 (HQVVAPLNQLVTASQRIEHGQFDSPPLDTNLPNELGLLAKTFNQMSSELHKLYR) form the HAMP domain. Positions 364-559 (TIARELHDSL…LVSISFRSAE (196 aa)) constitute a Histidine kinase domain. Residue His370 is modified to Phosphohistidine; by autocatalysis.

Its subcellular location is the cell inner membrane. The enzyme catalyses ATP + protein L-histidine = ADP + protein N-phospho-L-histidine.. Acts as a sensor for nitrate/nitrite and transduces signal of nitrate/nitrite availability to the NarL/NarP proteins. NarQ probably activates NarL and NarP by phosphorylation. NarQ probably negatively regulates the NarL protein by dephosphorylation. This Escherichia coli (strain K12) protein is Nitrate/nitrite sensor protein NarQ (narQ).